A 503-amino-acid polypeptide reads, in one-letter code: Probable cytosol aminopeptidase (503 aa).

The Mn(2+) site is built by Lys-274 and Asp-279. Lys-286 is an active-site residue. 3 residues coordinate Mn(2+): Asp-297, Asp-356, and Glu-358. The active site involves Arg-360.

Belongs to the peptidase M17 family. Requires Mn(2+) as cofactor.

It is found in the cytoplasm. It catalyses the reaction Release of an N-terminal amino acid, Xaa-|-Yaa-, in which Xaa is preferably Leu, but may be other amino acids including Pro although not Arg or Lys, and Yaa may be Pro. Amino acid amides and methyl esters are also readily hydrolyzed, but rates on arylamides are exceedingly low.. It carries out the reaction Release of an N-terminal amino acid, preferentially leucine, but not glutamic or aspartic acids.. In terms of biological role, presumably involved in the processing and regular turnover of intracellular proteins. Catalyzes the removal of unsubstituted N-terminal amino acids from various peptides. In Burkholderia orbicola (strain AU 1054), this protein is Probable cytosol aminopeptidase.